A 537-amino-acid chain; its full sequence is Protoporphyrinogen oxidase 1, chloroplastic (537 aa).

The N-terminal 34 residues, 1 to 34 (MELSLLRPTTQSLLPSFSKPNLRLNVYKPLRLRC), are a transit peptide targeting the chloroplast. N-acetylserine is present on Ser35. Residues 63-68 (GGGISG), 90-91 (EA), and 112-115 (GPNS) contribute to the FAD site. A compositionally biased stretch (basic and acidic residues) spans 256–268 (RKNAPKAERDPRL). A disordered region spans residues 256–275 (RKNAPKAERDPRLPKPQGQT). Residue 511-513 (VAL) participates in FAD binding.

The protein belongs to the protoporphyrinogen/coproporphyrinogen oxidase family. Protoporphyrinogen oxidase subfamily. The cofactor is FAD. Expressed at high levels in the leaves and at low levels in the roots and floral buds.

It localises to the plastid. The protein resides in the chloroplast. The enzyme catalyses protoporphyrinogen IX + 3 O2 = protoporphyrin IX + 3 H2O2. It participates in porphyrin-containing compound metabolism; protoporphyrin-IX biosynthesis; protoporphyrin-IX from protoporphyrinogen-IX: step 1/1. The protein operates within porphyrin-containing compound metabolism; chlorophyll biosynthesis. Its activity is regulated as follows. Inhibited by acifluorfen. Its function is as follows. Catalyzes the 6-electron oxidation of protoporphyrinogen-IX to form protoporphyrin-IX. The protein is Protoporphyrinogen oxidase 1, chloroplastic (PPOX1) of Arabidopsis thaliana (Mouse-ear cress).